A 182-amino-acid polypeptide reads, in one-letter code: Large ribosomal subunit protein uL6 (182 aa).

The protein belongs to the universal ribosomal protein uL6 family. As to quaternary structure, part of the 50S ribosomal subunit.

Its function is as follows. This protein binds to the 23S rRNA, and is important in its secondary structure. It is located near the subunit interface in the base of the L7/L12 stalk, and near the tRNA binding site of the peptidyltransferase center. This Desulforamulus reducens (strain ATCC BAA-1160 / DSM 100696 / MI-1) (Desulfotomaculum reducens) protein is Large ribosomal subunit protein uL6.